Reading from the N-terminus, the 64-residue chain is Conotoxin Mr3.5 (64 aa).

An N-terminal signal peptide occupies residues 1-19 (MSKLGVLLTICLLLFPLTA). Positions 20-46 (LPLDGDQPADQRAERTQAEKHSLPDPR) are excised as a propeptide. Cystine bridges form between C49–C58, C50–C62, and C54–C63. C63 is subject to Cysteine amide.

Belongs to the conotoxin M superfamily. Expressed by the venom duct.

The protein resides in the secreted. In Conus marmoreus (Marble cone), this protein is Conotoxin Mr3.5.